Consider the following 434-residue polypeptide: Serine/threonine transporter SstT (434 aa).

9 helical membrane passes run 14–34 (IVIG…WSFI), 41–61 (FVGA…MSAI), 72–92 (FGTV…AAVA), 135–155 (ALVE…GSGL), 172–192 (TVSA…VGLL), 210–230 (LLML…PFMV), 282–302 (ISIP…VSIM), 316–336 (IFLA…VSGI), and 351–371 (FGIS…IGVV). Positions 414-434 (KGTAEVVTPEKANEAEESEQV) are disordered.

It belongs to the dicarboxylate/amino acid:cation symporter (DAACS) (TC 2.A.23) family.

The protein resides in the cell membrane. It catalyses the reaction L-serine(in) + Na(+)(in) = L-serine(out) + Na(+)(out). The catalysed reaction is L-threonine(in) + Na(+)(in) = L-threonine(out) + Na(+)(out). Its function is as follows. Involved in the import of serine and threonine into the cell, with the concomitant import of sodium (symport system). This is Serine/threonine transporter SstT from Lacticaseibacillus paracasei (strain ATCC 334 / BCRC 17002 / CCUG 31169 / CIP 107868 / KCTC 3260 / NRRL B-441) (Lactobacillus paracasei).